The sequence spans 61 residues: Small ribosomal subunit protein uS14B (61 aa).

Residues C24, C27, C40, and C43 each contribute to the Zn(2+) site.

This sequence belongs to the universal ribosomal protein uS14 family. Zinc-binding uS14 subfamily. In terms of assembly, part of the 30S ribosomal subunit. Contacts proteins S3 and S10. It depends on Zn(2+) as a cofactor.

Functionally, binds 16S rRNA, required for the assembly of 30S particles and may also be responsible for determining the conformation of the 16S rRNA at the A site. The sequence is that of Small ribosomal subunit protein uS14B from Mycolicibacterium smegmatis (strain ATCC 700084 / mc(2)155) (Mycobacterium smegmatis).